The sequence spans 977 residues: MASQSEPGYLAAAQSDPGSNSERSTDSPVAGSEDDLVAAAPLLHSPEWSEERFRVDRKKLEAMLQAAAEGKGRSGEDFFQKIMEETNTQIAWPSKLKIGAKSKKDPHIKVSGKKEDVKEAKEMIMSVLDTKSNRVTLKMDVSHTEHSHVIGKGGNNIKKVMEDTGCHIHFPDSNRNNQAEKSNQVSIAGQPAGVESARARIRELLPLVLMFELPIAGILQPVPDPNTPSIQHISQTYSVSVSFKQRSRMYGATVTVRGSQNNTNAVKEGTAMLLEHLAGSLASAIPVSTQLDIAAQHHLFMMGRNGSNVKHIMQRTGAQIHFPDPSNPQKKSTVYLQGTIESVCLARQYLMGCLPLVLMFDMKEDIEVDPQVIAQLMEQLDVFISIKPKPKQPSKSVIVKSVERNALNMYEARKCLLGLESSGVSIATSLSPASCPAGLACPSLDILASAGLGLTGLGLLGPTTLSLNTSATPNSLLNALNTSVSPLQSSSSGTPSPTLWAPPIANTASATGFSTIPHLMLPSTAQATLTNILLSGVPTYGHTAPSPPPGLTPVDVHINSMQTEGKNISASINGHVQPANMKYGPLSTSSLGEKVLSSNHGDPSMQTAGPEQASPKSNSVEGCNDAFVEVGMPRSPSHSGNAGDLKQMLGASKVSCAKRQTVELLQGTKNSHLHGTDRLLSDPELSATESPLADKKAPGSERAAERAAAAQQKSERARLASQPTYVHMQAFDYEQKKLLATKAMLKKPVVTEVRTPTNTWSGLGFSKSMPAETIKELRRANHVSYKPTMTTAYEGSSLSLSRSSSREHLASGSESDNWRDRNGIGPMGHSEFSAPIGSPKRKQNKSREHYLSSSNYMDCISSLTGSNGCNLNSCFKGSDLPELFSKLGLGKYTDVFQQQEIDLQTFLTLTDQDLKELGITTFGARRKMLLAISELSKNRRKLFEPPNASCTSFLEGGASGRLPRQYHSDIASVSGRW.

The tract at residues 1–43 (MASQSEPGYLAAAQSDPGSNSERSTDSPVAGSEDDLVAAAPLL) is disordered. Residues Ser27, Ser32, and Ser45 each carry the phosphoserine modification. 2 consecutive KH domains span residues 134 to 201 (RVTL…RARI) and 286 to 350 (PVST…RQYL). Position 400 is an N6-acetyllysine (Lys400). Residues 590-621 (SLGEKVLSSNHGDPSMQTAGPEQASPKSNSVE) are compositionally biased toward polar residues. Disordered regions lie at residues 590-622 (SLGEKVLSSNHGDPSMQTAGPEQASPKSNSVEG), 667-702 (GTKNSHLHGTDRLLSDPELSATESPLADKKAPGSER), and 794-848 (EGSS…KSRE). Phosphoserine is present on residues Ser614 and Ser681. Residues 692 to 702 (LADKKAPGSER) are compositionally biased toward basic and acidic residues. Low complexity predominate over residues 794–803 (EGSSLSLSRS). Positions 875 to 938 (FKGSDLPELF…LLAISELSKN (64 aa)) constitute an SAM domain.

It belongs to the BicC family. Interacts (via KH domains) with ANKS6 (via SAM domain) in an RNA-dependent manner. Interacts with ANKS3. In the adult, predominantly expressed in heart and kidney. In 8 week old mice, expressed in growing primary oocytes and in the stromal cells of the theca.

Its subcellular location is the cytoplasm. Putative RNA-binding protein. May be involved in regulating gene expression during embryonic development. The chain is Protein bicaudal C homolog 1 (Bicc1) from Mus musculus (Mouse).